The sequence spans 84 residues: MALSKEEILTGLAEIINEVAGIPTSDVQPEKSFTDDLDVDSLSMVEVVVAAEEKFGVRIPDDEVKNLKTVGDAVDYIANATVSA.

A Carrier domain is found at 6-81 (EEILTGLAEI…DAVDYIANAT (76 aa)). Ser41 bears the O-(pantetheine 4'-phosphoryl)serine mark.

This sequence belongs to the acyl carrier protein (ACP) family. Post-translationally, 4'-phosphopantetheine is transferred from CoA to a specific serine of apo-ACP by AcpS. This modification is essential for activity because fatty acids are bound in thioester linkage to the sulfhydryl of the prosthetic group.

The protein resides in the cytoplasm. It functions in the pathway lipid metabolism; fatty acid biosynthesis. Carrier of the growing fatty acid chain in fatty acid biosynthesis. The polypeptide is Acyl carrier protein (Acidothermus cellulolyticus (strain ATCC 43068 / DSM 8971 / 11B)).